The chain runs to 971 residues: Zinc finger CCCH domain-containing protein 7A (971 aa).

TPR repeat units lie at residues 43 to 76 (VRNLFNEGNDVYREHDWNNSISQYTEALNIADYA), 89 to 122 (EKLYINRIACYSNMGFHDKVLEDCNIVLSLNASN), and 124 to 156 (KALYRKSKALSDLGRYKKAYDAVAKCSLAVPQD). The residue at position 210 (T210) is a Phosphothreonine. 2 consecutive C3H1-type zinc fingers follow at residues 634–656 (LCRHEVRYGCLREDECFYAHSLV) and 769–797 (PLQFDLCNHIASGKKCQYVGNCSFAHSPE). Residues 857–881 (FHCWMCGKNCNSEKQWQGHISSEKH) form a C2H2-type zinc finger. The C3H1-type 3 zinc-finger motif lies at 906 to 928 (ICDRYMNGTCPEGNSCKFAHGNA). Residues 924-952 (AHGNAELHEWEERRDALKMKLNKARKDHL) are a coiled coil.

It localises to the nucleus. Functionally, may be a specific regulator of miRNA biogenesis. Binds to microRNAs MIR7-1, MIR16-2 and MIR29A hairpins recognizing the 3'-ATA(A/T)-5' motif in the apical loop. The chain is Zinc finger CCCH domain-containing protein 7A (ZC3H7A) from Homo sapiens (Human).